Consider the following 99-residue polypeptide: Small ribosomal subunit protein eS24 (99 aa).

The protein belongs to the eukaryotic ribosomal protein eS24 family.

This Pyrococcus abyssi (strain GE5 / Orsay) protein is Small ribosomal subunit protein eS24.